The following is a 277-amino-acid chain: Probable xyloglucan endotransglucosylase/hydrolase protein 11 (277 aa).

The signal sequence occupies residues 1 to 24 (MRGSDQKILLMVMVVVAVVAAAQG). Positions 32–209 (VTWGNNYYQT…PKQMPYIAKF (178 aa)) constitute a GH16 domain. Asparagine 50 carries an N-linked (GlcNAc...) asparagine glycan. Glutamate 107 (nucleophile) is an active-site residue. Xyloglucan is bound by residues 123-125 (NTN) and 133-135 (GKD). Residue asparagine 194 is glycosylated (N-linked (GlcNAc...) asparagine). Disulfide bonds link cysteine 217–cysteine 227 and cysteine 260–cysteine 273. Arginine 265 contacts xyloglucan.

It belongs to the glycosyl hydrolase 16 family. XTH group 1 subfamily. In terms of processing, contains at least one intrachain disulfide bond essential for its enzymatic activity.

Its subcellular location is the secreted. The protein resides in the cell wall. It is found in the extracellular space. It localises to the apoplast. It carries out the reaction breaks a beta-(1-&gt;4) bond in the backbone of a xyloglucan and transfers the xyloglucanyl segment on to O-4 of the non-reducing terminal glucose residue of an acceptor, which can be a xyloglucan or an oligosaccharide of xyloglucan.. Its function is as follows. May catalyze xyloglucan endohydrolysis (XEH) and/or endotransglycosylation (XET). Cleaves and religates xyloglucan polymers, an essential constituent of the primary cell wall, and thereby participates in cell wall construction of growing tissues. The chain is Probable xyloglucan endotransglucosylase/hydrolase protein 11 (XTH11) from Arabidopsis thaliana (Mouse-ear cress).